The sequence spans 312 residues: Malate dehydrogenase (312 aa).

NAD(+) is bound by residues 12 to 17 (GAGFTG) and aspartate 36. Positions 87 and 93 each coordinate substrate. NAD(+) contacts are provided by residues asparagine 100 and 123–125 (LTN). Asparagine 125 serves as a coordination point for substrate. Serine 149 carries the phosphoserine modification. Arginine 156 is a substrate binding site. Catalysis depends on histidine 180, which acts as the Proton acceptor.

This sequence belongs to the LDH/MDH superfamily. MDH type 3 family.

The catalysed reaction is (S)-malate + NAD(+) = oxaloacetate + NADH + H(+). In terms of biological role, catalyzes the reversible oxidation of malate to oxaloacetate. The chain is Malate dehydrogenase from Bacillus cereus (strain ATCC 14579 / DSM 31 / CCUG 7414 / JCM 2152 / NBRC 15305 / NCIMB 9373 / NCTC 2599 / NRRL B-3711).